Reading from the N-terminus, the 806-residue chain is Mitogen-activated protein kinase 7 (806 aa).

The segment at 1–23 (MAEPLKEEDGEDGSGEPPGRVKA) is disordered. At alanine 2 the chain carries N-acetylalanine. The required for cytoplasmic targeting stretch occupies residues 2 to 77 (AEPLKEEDGE…VVSSARRRLT (76 aa)). The 293-residue stretch at 55–347 (YEIIETIGNG…AAAALRHPFL (293 aa)) folds into the Protein kinase domain. Residues 61–69 (IGNGAYGVV) and lysine 84 each bind ATP. The segment at 78–139 (GQQVAIKKIP…FRSVYVVLDL (62 aa)) is required for binding to MAP2K5. Positions 140-406 (MESDLHQIIH…QQIRFQPSLQ (267 aa)) are necessary for oligomerization. Aspartate 182 acts as the Proton acceptor in catalysis. A TXY motif is present at residues 219 to 221 (TEY). A may not be required for kinase activity; required to stimulate MEF2C activity region spans residues 407 to 806 (PVASEPVCPD…LSDLPDLQEP (400 aa)). Disordered regions lie at residues 424-473 (APSG…AISD) and 488-727 (RSRL…PKGS). Positions 433–443 (SPPPALPPCSD) are enriched in pro residues. Basic and acidic residues-rich tracts occupy residues 502-519 (PEPRKPVTAQERQREREE), 527-544 (RAKEREKRRQERERKERG), and 563-573 (DNDRSLLERWT). A Nuclear localization signal motif is present at residues 505 to 539 (RKPVTAQERQREREEKRRRRQERAKEREKRRQERE). Positions 578-592 (PPAPAPAPAPAPAPA) are enriched in pro residues. Residues 593–603 (PSSAQPTSTPT) are compositionally biased toward low complexity. The span at 627 to 643 (VCPPPGPVPQPAGPIPA) shows a compositional bias: pro residues. The segment covering 647–660 (TAPSTSLLASQSLV) has biased composition (polar residues). Over residues 678–689 (PSGPPPPDPGLT) the composition is skewed to pro residues. Over residues 693-710 (STSESPDVNLVTQQLSKS) the composition is skewed to polar residues. At serine 710 the chain carries Phosphoserine. Threonine 723 is modified (phosphothreonine).

Belongs to the protein kinase superfamily. CMGC Ser/Thr protein kinase family. MAP kinase subfamily. As to quaternary structure, interacts with MAP2K5. Forms oligomers. Interacts with MEF2A, MEF2C and MEF2D; the interaction phosphorylates the MEF2s and enhances transcriptional activity of MEF2A, MEF2C but not MEF2D. Interacts with SGK1. Interacts with PML. Interacts (via N-terminal half) with HSP90AB1-CDC37 chaperone complex in resting cells; the interaction is MAP2K5-independent and prevents MAPK7 from ubiquitination and proteasomal degradation. Interacts with STUB1/CHIP; the interaction is enhanced in the presence of IGF1 or MAP2K5 and promotes STUB1/CHIP E3 ligase activity. Mg(2+) serves as cofactor. Post-translationally, dually phosphorylated on Thr-219 and Tyr-221, which activates the enzyme. In terms of tissue distribution, detected in testis, brain, kidney, lung and heart. Detected in total embryo (at protein level).

It localises to the cytoplasm. The protein localises to the nucleus. It is found in the PML body. The catalysed reaction is L-seryl-[protein] + ATP = O-phospho-L-seryl-[protein] + ADP + H(+). The enzyme catalyses L-threonyl-[protein] + ATP = O-phospho-L-threonyl-[protein] + ADP + H(+). Activated by tyrosine and threonine phosphorylation. Activated in response to hyperosmolarity, hydrogen peroxide, and epidermal growth factor (EGF). In terms of biological role, plays a role in various cellular processes such as proliferation, differentiation and cell survival. The upstream activator of MAPK7 is the MAPK kinase MAP2K5. Upon activation, it translocates to the nucleus and phosphorylates various downstream targets including MEF2C. EGF activates MAPK7 through a Ras-independent and MAP2K5-dependent pathway. As part of the MAPK/ERK signaling pathway, acts as a negative regulator of apoptosis in cardiomyocytes via interaction with STUB1/CHIP and promotion of STUB1-mediated ubiquitination and degradation of ICER-type isoforms of CREM. May have a role in muscle cell differentiation. May be important for endothelial function and maintenance of blood vessel integrity. MAP2K5 and MAPK7 interact specifically with one another and not with MEK1/ERK1 or MEK2/ERK2 pathways. Phosphorylates SGK1 at Ser-78 and this is required for growth factor-induced cell cycle progression. Involved in the regulation of p53/TP53 by disrupting the PML-MDM2 interaction. The protein is Mitogen-activated protein kinase 7 (Mapk7) of Mus musculus (Mouse).